The sequence spans 244 residues: Derlin-2.2 (244 aa).

Topologically, residues 1-21 (MAQAVEEWYKQMPIITRSYLT) are cytoplasmic. A helical transmembrane segment spans residues 22 to 42 (AAVITTVGCSLDIISPYNLYL). Topologically, residues 43–96 (NPTLVVKQYQYWRLVTNFLYFRKMDLDFMFHMFFLARYCKLLEENSFRGKTADF) are lumenal. A helical transmembrane segment spans residues 97–117 (LYMLLFGASVLTGIVLIGGMI). Residues 118-121 (PYLS) are Cytoplasmic-facing. Residues 122–142 (ASFAKIIFLSNSLTFMMVYVW) traverse the membrane as a helical segment. The Lumenal segment spans residues 143–152 (SKQNPYIHMS). A helical membrane pass occupies residues 153-173 (FLGLFTFTAAYLPWVLLGFSI). The Cytoplasmic segment spans residues 174-244 (LVGASAWVDL…AAPFDEIHQD (71 aa)).

This sequence belongs to the derlin family.

The protein resides in the endoplasmic reticulum membrane. Its function is as follows. May be involved in the degradation process of specific misfolded endoplasmic reticulum (ER) luminal proteins. This is Derlin-2.2 (DER2.2) from Arabidopsis thaliana (Mouse-ear cress).